Consider the following 23-residue polypeptide: Dermaseptin-4 (23 aa).

A Glutamine amide modification is found at Gln23.

As to expression, expressed by the skin glands.

The protein resides in the secreted. In terms of biological role, antimicrobial peptide, active against the Gram-positive bacterium S.aureus, and the Gram-negative bacteria E.coli and P.aeruginosa. Has hemolytic activity (5% hemolysis at 128 ug/ml). This Phyllomedusa tarsius (Brownbelly leaf frog) protein is Dermaseptin-4.